A 311-amino-acid polypeptide reads, in one-letter code: Ribonuclease HIII (311 aa).

Positions 95-311 constitute an RNase H type-2 domain; sequence MSIVGSDEVG…NTEKAFRLLK (217 aa). Positions 101, 102, and 206 each coordinate a divalent metal cation.

Belongs to the RNase HII family. RnhC subfamily. Mn(2+) serves as cofactor. It depends on Mg(2+) as a cofactor.

It is found in the cytoplasm. It catalyses the reaction Endonucleolytic cleavage to 5'-phosphomonoester.. Endonuclease that specifically degrades the RNA of RNA-DNA hybrids. This is Ribonuclease HIII from Bacillus cereus (strain ZK / E33L).